The chain runs to 353 residues: Rhodopsin (353 aa).

Topologically, residues 1–36 (MNGTEGPYFYIPMVNTTGIVRSPYEYPQYYLVNPAA) are extracellular. 2 N-linked (GlcNAc...) asparagine glycosylation sites follow: N2 and N15. A helical membrane pass occupies residues 37–61 (YAALGAYMFLLILVGFPVNFLTLYV). Topologically, residues 62-73 (TLEHKKLRTPLN) are cytoplasmic. The chain crosses the membrane as a helical span at residues 74 to 96 (YILLNLAVADLFMVLGGFTTTMY). Residues 97–110 (TSMHGYFVLGRLGC) lie on the Extracellular side of the membrane. The cysteines at positions 110 and 187 are disulfide-linked. Residues 111–133 (NVEGFFATLGGEIALWSLVVLAI) traverse the membrane as a helical segment. The short motif at 134–136 (ERW) is the 'Ionic lock' involved in activated form stabilization element. The Cytoplasmic portion of the chain corresponds to 134-152 (ERWVVVCKPISNFRFSEDH). The helical transmembrane segment at 153 to 173 (AIMGLAFTWVMASACAVPPLV) threads the bilayer. The Extracellular portion of the chain corresponds to 174-202 (GWSRYIPEGMQCSCGIDYYTRAEGFNNES). N200 is a glycosylation site (N-linked (GlcNAc...) asparagine). Residues 203 to 224 (FVIYMFVCHFLIPLVVVFFCYG) traverse the membrane as a helical segment. Residues 225–252 (RLLCAVKEAAAAQQESETTQRAEREVSR) are Cytoplasmic-facing. The chain crosses the membrane as a helical span at residues 253 to 274 (MVVIMVVAFLVCWCPYAGVAWY). Over 275-286 (IFTHQGSEFGPL) the chain is Extracellular. A helical membrane pass occupies residues 287–308 (FMTFPAFFAKSSSIYNPMIYIC). At K296 the chain carries N6-(retinylidene)lysine. Residues 309-353 (MNKQFRHCMITTLCCGKNPFEEEEGASTTSKTEASSVSSSSVSPA) lie on the Cytoplasmic side of the membrane. S-palmitoyl cysteine attachment occurs at residues C322 and C323. Positions 330–353 (EEEGASTTSKTEASSVSSSSVSPA) are disordered. Low complexity predominate over residues 334–353 (ASTTSKTEASSVSSSSVSPA).

It belongs to the G-protein coupled receptor 1 family. Opsin subfamily. In terms of processing, phosphorylated on some or all of the serine and threonine residues present in the C-terminal region. Contains one covalently linked retinal chromophore.

It is found in the membrane. Its subcellular location is the cell projection. The protein localises to the cilium. It localises to the photoreceptor outer segment. In terms of biological role, photoreceptor required for image-forming vision at low light intensity. While most salt water fish species use retinal as chromophore, most freshwater fish use 3-dehydroretinal, or a mixture of retinal and 3-dehydroretinal. Light-induced isomerization of 11-cis to all-trans retinal triggers a conformational change that activates signaling via G-proteins. Subsequent receptor phosphorylation mediates displacement of the bound G-protein alpha subunit by arrestin and terminates signaling. In Chelon labrosus (Thicklip grey mullet), this protein is Rhodopsin (rho).